A 48-amino-acid chain; its full sequence is Small ribosomal subunit protein uS14 (48 aa).

Residues C13, C16, C31, and C34 each contribute to the Zn(2+) site.

This sequence belongs to the universal ribosomal protein uS14 family. Zinc-binding uS14 subfamily. As to quaternary structure, part of the 30S ribosomal subunit. Requires Zn(2+) as cofactor.

Binds 16S rRNA, required for the assembly of 30S particles. In Methanopyrus kandleri (strain AV19 / DSM 6324 / JCM 9639 / NBRC 100938), this protein is Small ribosomal subunit protein uS14.